The sequence spans 194 residues: Large ribosomal subunit protein uL5 (194 aa).

This sequence belongs to the universal ribosomal protein uL5 family. In terms of assembly, part of the 50S ribosomal subunit; part of the 5S rRNA/L5/L18/L25 subcomplex. Contacts the 5S rRNA and the P site tRNA. Forms a bridge to the 30S subunit in the 70S ribosome.

Functionally, this is one of the proteins that bind and probably mediate the attachment of the 5S RNA into the large ribosomal subunit, where it forms part of the central protuberance. In the 70S ribosome it contacts protein S13 of the 30S subunit (bridge B1b), connecting the 2 subunits; this bridge is implicated in subunit movement. Contacts the P site tRNA; the 5S rRNA and some of its associated proteins might help stabilize positioning of ribosome-bound tRNAs. The polypeptide is Large ribosomal subunit protein uL5 (Frankia alni (strain DSM 45986 / CECT 9034 / ACN14a)).